Reading from the N-terminus, the 622-residue chain is Iron transport multicopper oxidase fetC (622 aa).

The first 20 residues, 1 to 20 (MARLVHLTAVLAASIRLAAA), serve as a signal peptide directing secretion. Residues 21–552 (ATINHDFNVT…DPLPAGFTTR (532 aa)) are Extracellular-facing. N-linked (GlcNAc...) asparagine glycosylation is found at asparagine 28 and asparagine 74. 2 consecutive Plastocyanin-like domains span residues 29 to 144 (VTWV…VHDP) and 154 to 301 (EEIV…SYDK). Residues histidine 80 and histidine 82 each contribute to the Cu cation site. 2 N-linked (GlcNAc...) asparagine glycosylation sites follow: asparagine 87 and asparagine 112. Residues histidine 124 and histidine 126 each coordinate Cu cation. 5 N-linked (GlcNAc...) asparagine glycosylation sites follow: asparagine 194, asparagine 198, asparagine 265, asparagine 292, and asparagine 358. Residues 362–497 (KSPKVPTLYS…GLVATFVEAP (136 aa)) form the Plastocyanin-like 3 domain. Residues histidine 412, histidine 415, and histidine 417 each coordinate Cu cation. An N-linked (GlcNAc...) asparagine glycan is attached at asparagine 428. Cu cation contacts are provided by histidine 478, cysteine 479, histidine 480, and histidine 484. The helical transmembrane segment at 553-573 (GIVALVFSCVTGILGICVVAW) threads the bilayer. Residues 574-622 (YGMSQPLEEATAAVATLVREAQVTGSGTSPNHDDGNAAATEAGVLRRRT) are Cytoplasmic-facing. The tract at residues 597-622 (TGSGTSPNHDDGNAAATEAGVLRRRT) is disordered.

It belongs to the multicopper oxidase family.

The protein resides in the cell membrane. Functionally, cell surface ferroxidase; part of the reductive iron assimilatory system (RIA), a siderophore-independent high affinity iron uptake mechanism. Required to oxidize Fe(2+) and release it from the transporter. In Epichloe festucae (strain E2368), this protein is Iron transport multicopper oxidase fetC.